Reading from the N-terminus, the 1051-residue chain is DNA-directed RNA polymerase subunit beta (1051 aa).

It belongs to the RNA polymerase beta chain family. As to quaternary structure, in plastids the minimal PEP RNA polymerase catalytic core is composed of four subunits: alpha, beta, beta', and beta''. When a (nuclear-encoded) sigma factor is associated with the core the holoenzyme is formed, which can initiate transcription (Potential).

It is found in the plastid. It localises to the apicoplast. The catalysed reaction is RNA(n) + a ribonucleoside 5'-triphosphate = RNA(n+1) + diphosphate. DNA-dependent RNA polymerase catalyzes the transcription of DNA into RNA using the four ribonucleoside triphosphates as substrates. The protein is DNA-directed RNA polymerase subunit beta (rpoB) of Toxoplasma gondii.